A 355-amino-acid polypeptide reads, in one-letter code: Peptide chain release factor 1 (355 aa).

Q233 carries the N5-methylglutamine modification.

It belongs to the prokaryotic/mitochondrial release factor family. Methylated by PrmC. Methylation increases the termination efficiency of RF1.

It is found in the cytoplasm. Peptide chain release factor 1 directs the termination of translation in response to the peptide chain termination codons UAG and UAA. This is Peptide chain release factor 1 from Syntrophomonas wolfei subsp. wolfei (strain DSM 2245B / Goettingen).